The sequence spans 217 residues: Probable transaldolase (217 aa).

K83 functions as the Schiff-base intermediate with substrate in the catalytic mechanism.

The protein belongs to the transaldolase family. Type 3B subfamily.

It localises to the cytoplasm. The enzyme catalyses D-sedoheptulose 7-phosphate + D-glyceraldehyde 3-phosphate = D-erythrose 4-phosphate + beta-D-fructose 6-phosphate. It functions in the pathway carbohydrate degradation; pentose phosphate pathway; D-glyceraldehyde 3-phosphate and beta-D-fructose 6-phosphate from D-ribose 5-phosphate and D-xylulose 5-phosphate (non-oxidative stage): step 2/3. Transaldolase is important for the balance of metabolites in the pentose-phosphate pathway. This chain is Probable transaldolase, found in Anaeromyxobacter dehalogenans (strain 2CP-C).